The sequence spans 629 residues: Forkhead box protein O1-B (629 aa).

Disordered stretches follow at residues 1 to 54 (MAEP…PEQG), 88 to 134 (CAHP…SRRN), 211 to 308 (SWWM…SPFL), and 359 to 397 (KNNTQGSQEAQTALSSPLMQGSPGYPSYTSPNMGPQPQV). Over residues 36–46 (QPGNSNTSSPA) the composition is skewed to polar residues. Low complexity-rich tracts occupy residues 90–107 (HPQQQHPQQPNPQLTHPQ) and 115–133 (PASGSSPAAAQRKSSSSRR). Residues 136–230 (WGNMSYADLI…KSGKSPRRRA (95 aa)) constitute a DNA-binding region (fork-head). Residues 240-251 (TKSRGRAAKKKM) show a composition bias toward basic residues. Composition is skewed to polar residues over residues 291–302 (TRASSDASTLSG), 359–377 (KNNTQGSQEAQTALSSPLM), and 385–397 (SYTSPNMGPQPQV).

It is found in the cytoplasm. The protein localises to the nucleus. Functionally, transcription factor that regulates metabolic homeostasis in response to oxidative stress. Binds to the consensus sequence 5'-TT[G/A]TTTTG-3' and the related Daf-16 family binding element (DBE) with consensus sequence 5'-TT[G/A]TTTAC-3'. Main regulator of redox balance and osteoblast numbers and controls bone mass. Orchestrates the endocrine function of the skeleton in regulating glucose metabolism. May act as a positive regulator of apoptosis in cardiac smooth muscle cells as a result of its transcriptional activation of pro-apoptotic genes. The protein is Forkhead box protein O1-B (foxo1b) of Danio rerio (Zebrafish).